Consider the following 136-residue polypeptide: Large ribosomal subunit protein bL12 (136 aa).

It belongs to the bacterial ribosomal protein bL12 family. In terms of assembly, homodimer. Part of the ribosomal stalk of the 50S ribosomal subunit. Forms a multimeric L10(L12)X complex, where L10 forms an elongated spine to which 2 to 4 L12 dimers bind in a sequential fashion. Binds GTP-bound translation factors.

In terms of biological role, forms part of the ribosomal stalk which helps the ribosome interact with GTP-bound translation factors. Is thus essential for accurate translation. The polypeptide is Large ribosomal subunit protein bL12 (Synechococcus sp. (strain JA-2-3B'a(2-13)) (Cyanobacteria bacterium Yellowstone B-Prime)).